The following is a 961-amino-acid chain: DNA repair endonuclease XPF (961 aa).

3 disordered regions span residues 1 to 27 (MADS…SADT), 451 to 485 (NYAK…PPLA), and 674 to 693 (PTDE…QATK). Over residues 13-22 (TENERPKEVE) the composition is skewed to basic and acidic residues. Over residues 458-469 (TRSAPPKNVSSN) the composition is skewed to polar residues. Residues 697 to 777 (KVIVDMREFR…KPILLIEFDQ (81 aa)) form the ERCC4 domain.

It belongs to the XPF family. As to quaternary structure, heterodimer. Interacts with hdm.

The protein resides in the nucleus. Its function is as follows. Implicated in recombination events during meiosis, mostly in meiotic exchange. May directly resolve Holliday junctions within recombination intermediates leading to DNA exchange. Also required for the repair of mismatches within meiotic heteroduplex DNA and for nucleotide excision repair. The protein is DNA repair endonuclease XPF (mei-9) of Drosophila melanogaster (Fruit fly).